Reading from the N-terminus, the 209-residue chain is Large ribosomal subunit protein uL3 (209 aa).

Position 150 is an N5-methylglutamine (Gln-150).

This sequence belongs to the universal ribosomal protein uL3 family. Part of the 50S ribosomal subunit. Forms a cluster with proteins L14 and L19. Post-translationally, methylated by PrmB.

Functionally, one of the primary rRNA binding proteins, it binds directly near the 3'-end of the 23S rRNA, where it nucleates assembly of the 50S subunit. The protein is Large ribosomal subunit protein uL3 of Klebsiella pneumoniae (strain 342).